Reading from the N-terminus, the 134-residue chain is Phosphoribosyl-AMP cyclohydrolase (134 aa).

Position 80 (Asp-80) interacts with Mg(2+). Cys-81 contacts Zn(2+). Positions 82 and 84 each coordinate Mg(2+). Residues Cys-98 and Cys-105 each contribute to the Zn(2+) site.

This sequence belongs to the PRA-CH family. Homodimer. Mg(2+) is required as a cofactor. Zn(2+) serves as cofactor.

Its subcellular location is the cytoplasm. The enzyme catalyses 1-(5-phospho-beta-D-ribosyl)-5'-AMP + H2O = 1-(5-phospho-beta-D-ribosyl)-5-[(5-phospho-beta-D-ribosylamino)methylideneamino]imidazole-4-carboxamide. It functions in the pathway amino-acid biosynthesis; L-histidine biosynthesis; L-histidine from 5-phospho-alpha-D-ribose 1-diphosphate: step 3/9. Its function is as follows. Catalyzes the hydrolysis of the adenine ring of phosphoribosyl-AMP. This is Phosphoribosyl-AMP cyclohydrolase from Janthinobacterium sp. (strain Marseille) (Minibacterium massiliensis).